Consider the following 187-residue polypeptide: PRA1 family protein G1 (187 aa).

Helical transmembrane passes span 84-104 (LFLI…AMWL), 125-145 (VIVF…NSLQ), and 146-166 (CLIL…IIRN).

This sequence belongs to the PRA1 family. Expressed in roots and lateral roots.

The protein localises to the endosome membrane. Functionally, may be involved in both secretory and endocytic intracellular trafficking in the endosomal/prevacuolar compartments. This chain is PRA1 family protein G1 (PRA1G1), found in Arabidopsis thaliana (Mouse-ear cress).